Consider the following 314-residue polypeptide: tRNA dimethylallyltransferase (314 aa).

Residue 40–47 (GPTASGKS) participates in ATP binding. A substrate-binding site is contributed by 42–47 (TASGKS).

Belongs to the IPP transferase family. Monomer. The cofactor is Mg(2+).

The catalysed reaction is adenosine(37) in tRNA + dimethylallyl diphosphate = N(6)-dimethylallyladenosine(37) in tRNA + diphosphate. Functionally, catalyzes the transfer of a dimethylallyl group onto the adenine at position 37 in tRNAs that read codons beginning with uridine, leading to the formation of N6-(dimethylallyl)adenosine (i(6)A). This Cereibacter sphaeroides (strain KD131 / KCTC 12085) (Rhodobacter sphaeroides) protein is tRNA dimethylallyltransferase.